The following is an 801-amino-acid chain: Sucrose synthase isoform 2 (801 aa).

Positions 271 to 748 (MIFNVVILSP…GLKRIQEKYT (478 aa)) are GT-B glycosyltransferase.

The protein belongs to the glycosyltransferase 1 family. Plant sucrose synthase subfamily. Homotetramer. In terms of tissue distribution, exclusively expressed in flowers.

The enzyme catalyses an NDP-alpha-D-glucose + D-fructose = a ribonucleoside 5'-diphosphate + sucrose + H(+). Functionally, sucrose-cleaving enzyme that provides UDP-glucose and fructose for various metabolic pathways. The polypeptide is Sucrose synthase isoform 2 (Daucus carota (Wild carrot)).